Consider the following 244-residue polypeptide: Serine-rich single-pass membrane protein 1 (244 aa).

A helical membrane pass occupies residues 35-55 (CGTIGSFLLWYFVIVFVLMFF). 3 disordered regions span residues 65–114 (DKKD…PVTN), 126–191 (QRRA…LGSY), and 210–244 (LAHHSRQKPSVTPPMKRDSQEESSISDINKKFSKF). A compositionally biased stretch (basic and acidic residues) spans 80-94 (ASKETSCKRQSKDSA). 2 stretches are compositionally biased toward polar residues: residues 96–114 (DPSQTMKKPKQNQLTPVTN) and 132–142 (QSQFNEVNQNQ). Residues 161 to 176 (SWKESESEHHPSPDSI) are compositionally biased toward basic and acidic residues.

It localises to the membrane. The chain is Serine-rich single-pass membrane protein 1 (SSMEM1) from Homo sapiens (Human).